Reading from the N-terminus, the 446-residue chain is Na(+)-translocating NADH-quinone reductase subunit A (446 aa).

The protein belongs to the NqrA family. In terms of assembly, composed of six subunits; NqrA, NqrB, NqrC, NqrD, NqrE and NqrF.

It catalyses the reaction a ubiquinone + n Na(+)(in) + NADH + H(+) = a ubiquinol + n Na(+)(out) + NAD(+). NQR complex catalyzes the reduction of ubiquinone-1 to ubiquinol by two successive reactions, coupled with the transport of Na(+) ions from the cytoplasm to the periplasm. NqrA to NqrE are probably involved in the second step, the conversion of ubisemiquinone to ubiquinol. The sequence is that of Na(+)-translocating NADH-quinone reductase subunit A from Histophilus somni (strain 129Pt) (Haemophilus somnus).